Reading from the N-terminus, the 729-residue chain is Kinesin-like protein KAR3 (729 aa).

The interval 1 to 48 (MESLPRTPTKGRSTQHLSTPSPKNDILAMNGHKRRNTTTPPPKHTLLK) is disordered. Positions 1-109 (MESLPRTPTK…ENVNELNRTQ (109 aa)) are globular. Polar residues predominate over residues 10–22 (KGRSTQHLSTPSP). Positions 110–357 (AILFEKKATL…LEEYIKDTEL (248 aa)) form a coiled coil. Asn386, Arg388, Arg392, Glu454, Gly477, Ser478, Gly479, Lys480, Thr481, Phe482, Glu554, Lys579, and Thr694 together coordinate ATP. Residues 386 to 723 (NIRVYCRIRP…LRFASKVNST (338 aa)) form the Kinesin motor domain.

Belongs to the TRAFAC class myosin-kinesin ATPase superfamily. Kinesin family. NCD subfamily. As to quaternary structure, interacts with CIK1; the interaction is direct. Interacts with VIK1; the interaction is direct.

It localises to the cytoplasm. Its subcellular location is the cytoskeleton. The protein resides in the microtubule organizing center. It is found in the spindle pole body. The protein localises to the nucleus. It localises to the chromosome. Its subcellular location is the spindle. It catalyses the reaction ATP + H2O = ADP + phosphate + H(+). The catalysed reaction is ATP + H2O + a kinesin associated with a microtubule at position (n) = ADP + phosphate + a kinesin associated with a microtubule at position (n-1, toward the minus end).. In terms of biological role, minus end-directed microtubule (MT) motor involved in spindle midzone assembly, poleward transport of newly captured kinetochores along the lateral side of MTs, karyogamy (nuclear fusion) during mating, and with an essential function in meiosis I. Functions together with the accessory proteins CIK1 or VIK1. Drives the poleward transport of newly captured kinetochores along the lateral side of MTs, both during S-phase and during M-phase. To contribute to spindle midzone assembly during mitotic metaphase, the nuclear KAR3-CIK1 motor cross-links anti-parallel microtubules to align them on the spindle axis; as the motor travels polewards splayed microtubules are pulled into alignment. During the karyogamy (nuclear fusion) step of mating, KAR3-CIK1 cross-links antiparallel cytoplasmic microtubules emanating from the spindle pole bodies of mating partners; the motor activity of KAR3 creates the force that pulls the nuclei together by sliding cross-linked microtubules past one another. KAR3-CIK1 promotes microtubule shortening predominantly from the microtubule plus-end. Together with cytoplasmic VIK1, may act to stabilize microtubules. Requires accessory protein VIK1 for spindle pole body localization and to allow the CIN8 and KIP1 motors to generate outwardly directed spindle forces. Essential during meiosis I. The ATPase activity is stimulated by microtubule-binding. The chain is Kinesin-like protein KAR3 (KAR3) from Saccharomyces cerevisiae (strain ATCC 204508 / S288c) (Baker's yeast).